Here is a 590-residue protein sequence, read N- to C-terminus: MNLITPTIILTIMLSLMMSIMQPHNNTKNNLMVLFLISLIPINPLLNNNELTLTLTPLIISPTENINISITLDTASLLFTPIALFITWSITEFSLWYMATDPNINKFIKYLLTFLITMLVIITANNMYQLFIGWEGVGIMSFLLIGWWHGRQDANTAALQAIIYNRIGDIGLIMTTAWMMTTSSINMQELMIQHEVVNIIPLLGLVAAATGKSAQFSLHPWLPSAMEGPTPVSALLHSSTMVVAGVFLLIRLHPILHNNKIMLTCCLILGATTTMFAAAAATTYFDIKKIIALSTTSQLGLMMTMIGLNQPTLAFLHMITHSFFKAMLFLCSGSYIHNLNNEQDIRMMGGLLKTLPMTSSFLTIANLSLMGMPFLSGFYSKDTIIETLANSYTNSWAIMITMIATILSACYSTQIMLFTIMEHPRTHHTTHKETKNITHPLARLMLTSILMGTMTKMSTLQTTTMVTMPKTIKLMALISTIIGVLLSKDLTHMTHHMKPKKPNKQNMFFNQLAFFNIPHRTITINTLKISQQTSTELMDLWTLEVWGPKGLSNTITNTIHLLTQQKNMIKNYMAIFTMTTMTVLLFIMSK.

15 consecutive transmembrane segments (helical) span residues M1–M21, L31–L51, L77–Y97, I104–A124, L130–G150, I167–M187, L190–T210, T230–I250, I261–A281, A314–I336, L355–L375, I398–F418, H439–Q461, V466–L486, and M568–M588.

Belongs to the complex I subunit 5 family.

The protein localises to the mitochondrion inner membrane. It catalyses the reaction a ubiquinone + NADH + 5 H(+)(in) = a ubiquinol + NAD(+) + 4 H(+)(out). Its function is as follows. Core subunit of the mitochondrial membrane respiratory chain NADH dehydrogenase (Complex I) that is believed to belong to the minimal assembly required for catalysis. Complex I functions in the transfer of electrons from NADH to the respiratory chain. The immediate electron acceptor for the enzyme is believed to be ubiquinone. The sequence is that of NADH-ubiquinone oxidoreductase chain 5 (MT-ND5) from Lycodon semicarinatus (Ryukyu odd-tooth snake).